The following is a 654-amino-acid chain: Bifunctional polymyxin resistance protein ArnA (654 aa).

Residues 1-303 (MKVIVFAYHE…NISRIKGKKL (303 aa)) form a formyltransferase ArnAFT region. The active-site Proton donor; for formyltransferase activity is His105. (6R)-10-formyltetrahydrofolate is bound at residue 137-141 (TKKID). The segment at 313–654 (NLKKILILGV…INFFINNNTS (342 aa)) is dehydrogenase ArnADH. Residues Asp346 and 367-368 (DI) each bind NAD(+). UDP-alpha-D-glucuronate-binding positions include Ala392, Tyr397, and 431 to 432 (TS). Glu433 functions as the Proton acceptor; for decarboxylase activity in the catalytic mechanism. Residues Arg459, Asn491, 532–534 (QKR), and Tyr612 each bind UDP-alpha-D-glucuronate. Catalysis depends on Arg618, which acts as the Proton donor; for decarboxylase activity.

It in the N-terminal section; belongs to the Fmt family. UDP-L-Ara4N formyltransferase subfamily. In the C-terminal section; belongs to the NAD(P)-dependent epimerase/dehydratase family. UDP-glucuronic acid decarboxylase subfamily. In terms of assembly, homohexamer, formed by a dimer of trimers.

The catalysed reaction is UDP-alpha-D-glucuronate + NAD(+) = UDP-beta-L-threo-pentopyranos-4-ulose + CO2 + NADH. It carries out the reaction UDP-4-amino-4-deoxy-beta-L-arabinose + (6R)-10-formyltetrahydrofolate = UDP-4-deoxy-4-formamido-beta-L-arabinose + (6S)-5,6,7,8-tetrahydrofolate + H(+). It participates in nucleotide-sugar biosynthesis; UDP-4-deoxy-4-formamido-beta-L-arabinose biosynthesis; UDP-4-deoxy-4-formamido-beta-L-arabinose from UDP-alpha-D-glucuronate: step 1/3. It functions in the pathway nucleotide-sugar biosynthesis; UDP-4-deoxy-4-formamido-beta-L-arabinose biosynthesis; UDP-4-deoxy-4-formamido-beta-L-arabinose from UDP-alpha-D-glucuronate: step 3/3. Its pathway is bacterial outer membrane biogenesis; lipopolysaccharide biosynthesis. Functionally, bifunctional enzyme that catalyzes the oxidative decarboxylation of UDP-glucuronic acid (UDP-GlcUA) to UDP-4-keto-arabinose (UDP-Ara4O) and the addition of a formyl group to UDP-4-amino-4-deoxy-L-arabinose (UDP-L-Ara4N) to form UDP-L-4-formamido-arabinose (UDP-L-Ara4FN). The modified arabinose is attached to lipid A and is required for resistance to polymyxin and cationic antimicrobial peptides. The sequence is that of Bifunctional polymyxin resistance protein ArnA from Wigglesworthia glossinidia brevipalpis.